The primary structure comprises 341 residues: MATIKDVAKRANVSTTTVSHVINKTRFVAEETRNAVWTAIKELHYSPSAVARSLKVNHTKSIGLLATSSEAAYFAEIIEAVEKNCFQKGYTLILGNAWNNLEKQRAYLSMMAQKRVDGLLVMCSEYPEPLLSMLEEYRHIPMVVMDWGEAKADFTDTVIDNAFAGGYMAGRYLVERGHRDIGVIPGPLERNTGAGRLAGFMKAMEEALINVPDNWIVQGDFEPESGYHAMQQILSQSHRPTAVFCGGDIMAMGALCAADEMGLRVPQDVSVIGYDNVRNARYFTPALTTIHQPKDSLGETAFNMLLDRIVNKREESQSIEVHPRLVERRSVADGPFRDYRR.

The HTH lacI-type domain maps to 2-56 (ATIKDVAKRANVSTTTVSHVINKTRFVAEETRNAVWTAIKELHYSPSAVARSLKV). Positions 4 to 23 (IKDVAKRANVSTTTVSHVIN) form a DNA-binding region, H-T-H motif. A DNA-binding region spans residues 48–56 (SAVARSLKV). Positions 73, 190, 192, 221, and 275 each coordinate hypoxanthine.

In terms of assembly, homodimer.

It participates in purine metabolism; purine nucleotide biosynthesis [regulation]. Its function is as follows. Is the main repressor of the genes involved in the de novo synthesis of purine nucleotides, regulating purB, purC, purEK, purF, purHD, purL, purMN and guaBA expression. PurR is allosterically activated to bind its cognate DNA by binding the purine corepressors, hypoxanthine or guanine, thereby effecting transcription repression. This is HTH-type transcriptional repressor PurR from Salmonella paratyphi A (strain ATCC 9150 / SARB42).